The following is a 222-amino-acid chain: Glutathione S-transferase alpha-4 (222 aa).

Met-1 carries the N-acetylmethionine modification. One can recognise a GST N-terminal domain in the interval 3–83 (VKPKLYYFQG…YLAAKYNLYG (81 aa)). Glutathione is bound by residues Tyr-9, 54-55 (QV), and 67-68 (QT). One can recognise a GST C-terminal domain in the interval 85-208 (DLKERVRIDM…QPGSQRKPPP (124 aa)).

Belongs to the GST superfamily. Alpha family. As to quaternary structure, homodimer.

Its subcellular location is the cytoplasm. The enzyme catalyses RX + glutathione = an S-substituted glutathione + a halide anion + H(+). In terms of biological role, conjugation of reduced glutathione to a wide number of exogenous and endogenous hydrophobic electrophiles. The polypeptide is Glutathione S-transferase alpha-4 (Gsta4) (Rattus norvegicus (Rat)).